The primary structure comprises 157 residues: Ribosome-binding factor A (157 aa).

The interval 124–157 (SAGAQFAGDADPYRKPESDDESDTAAKTDGDAAE) is disordered. The segment covering 147-157 (TAAKTDGDAAE) has biased composition (basic and acidic residues).

The protein belongs to the RbfA family. Monomer. Binds 30S ribosomal subunits, but not 50S ribosomal subunits or 70S ribosomes.

It is found in the cytoplasm. Functionally, one of several proteins that assist in the late maturation steps of the functional core of the 30S ribosomal subunit. Associates with free 30S ribosomal subunits (but not with 30S subunits that are part of 70S ribosomes or polysomes). Required for efficient processing of 16S rRNA. May interact with the 5'-terminal helix region of 16S rRNA. The protein is Ribosome-binding factor A of Streptomyces avermitilis (strain ATCC 31267 / DSM 46492 / JCM 5070 / NBRC 14893 / NCIMB 12804 / NRRL 8165 / MA-4680).